Here is a 274-residue protein sequence, read N- to C-terminus: Thiamine kinase (274 aa).

The protein belongs to the thiamine kinase family.

It carries out the reaction thiamine + ATP = thiamine phosphate + ADP + H(+). Its pathway is cofactor biosynthesis; thiamine diphosphate biosynthesis; thiamine phosphate from thiamine: step 1/1. Catalyzes the ATP-dependent phosphorylation of thiamine to thiamine phosphate. Is involved in thiamine salvage. This is Thiamine kinase from Escherichia coli O45:K1 (strain S88 / ExPEC).